A 345-amino-acid chain; its full sequence is Nuclear distribution protein nudE-like 1-A (345 aa).

Positions 19–190 (WRELSKRLKQ…LAVRERQTDG (172 aa)) form a coiled coil. Residues 182–192 (AVRERQTDGTR) are compositionally biased toward basic and acidic residues. Disordered regions lie at residues 182–206 (AVRE…CDKT) and 326–345 (PPGV…PLSV). Residues 334 to 345 (PPSPPGMLPLSV) show a composition bias toward pro residues.

Belongs to the nudE family. Post-translationally, phosphorylated in mitosis.

The protein localises to the cytoplasm. Its subcellular location is the cytoskeleton. It localises to the microtubule organizing center. The protein resides in the centrosome. It is found in the spindle. Its function is as follows. Required for organization of the cellular microtubule array and microtubule anchoring at the centrosome. Positively regulates the activity of the minus-end directed microtubule motor protein dynein. May enhance dynein-mediated microtubule sliding by targeting dynein to the microtubule plus end. Positively regulates lysosome peripheral distribution and ruffled border formation in osteoclasts. In Xenopus laevis (African clawed frog), this protein is Nuclear distribution protein nudE-like 1-A (ndel1-a).